The following is a 135-amino-acid chain: MSGLIARAVTEVAQRKAVLEKELPQLVIEILSDLLGAFNPGELLVRAVRHAIERRYNGAEEVCLHVCATQVDMLAREFAGCDGREKRPKVRIETDPTLSPQECVLWSEYGNVALGLDAQMRAALGFEYLSEEGEL.

Belongs to the SctL stator family. As to quaternary structure, the core secretion machinery of the T3SS is composed of approximately 20 different proteins, including cytoplasmic components, a base, an export apparatus and a needle. This subunit is part of the cytosolic complex.

It localises to the cytoplasm. Its function is as follows. Component of the type III secretion system (T3SS), also called injectisome, which is used to inject bacterial effector proteins into eukaryotic host cells. Acts as a regulator of the HrcN/SctN ATPase activity. This is Type 3 secretion system stator protein from Rhizobium fredii (Sinorhizobium fredii).